The primary structure comprises 104 residues: L-rhamnose mutarotase (104 aa).

Tyr18 serves as a coordination point for substrate. His22 (proton donor) is an active-site residue. Substrate is bound by residues Tyr41 and 76–77; that span reads WW.

The protein belongs to the rhamnose mutarotase family. Homodimer.

It localises to the cytoplasm. The enzyme catalyses alpha-L-rhamnose = beta-L-rhamnose. The protein operates within carbohydrate metabolism; L-rhamnose metabolism. In terms of biological role, involved in the anomeric conversion of L-rhamnose. This chain is L-rhamnose mutarotase, found in Phocaeicola vulgatus (strain ATCC 8482 / DSM 1447 / JCM 5826 / CCUG 4940 / NBRC 14291 / NCTC 11154) (Bacteroides vulgatus).